Reading from the N-terminus, the 367-residue chain is Multifunctional tryptophan biosynthesis protein (367 aa).

The region spanning 7–201 (NVVMIDNYDS…LNVSGGYWEE (195 aa)) is the Glutamine amidotransferase type-1 domain. Position 58–60 (58–60 (GPG)) interacts with L-glutamine. Cysteine 86 serves as the catalytic Nucleophile; for GATase activity. Residues glutamine 90 and 136–137 (SL) contribute to the L-glutamine site. Catalysis depends on for GATase activity residues histidine 175 and glutamate 177. The indole-3-glycerol phosphate synthase stretch occupies residues 209-367 (RKESILEKIY…TVLLIVKMLS (159 aa)).

In terms of assembly, tetramer of two components I and two components II.

It carries out the reaction chorismate + L-glutamine = anthranilate + pyruvate + L-glutamate + H(+). It catalyses the reaction 1-(2-carboxyphenylamino)-1-deoxy-D-ribulose 5-phosphate + H(+) = (1S,2R)-1-C-(indol-3-yl)glycerol 3-phosphate + CO2 + H2O. It participates in amino-acid biosynthesis; L-tryptophan biosynthesis; L-tryptophan from chorismate: step 1/5. It functions in the pathway amino-acid biosynthesis; L-tryptophan biosynthesis; L-tryptophan from chorismate: step 4/5. This chain is Multifunctional tryptophan biosynthesis protein, found in Pichia angusta (Yeast).